Reading from the N-terminus, the 337-residue chain is Inositol 2-dehydrogenase (337 aa).

The protein belongs to the Gfo/Idh/MocA family. Homotetramer.

The enzyme catalyses myo-inositol + NAD(+) = scyllo-inosose + NADH + H(+). Its function is as follows. Involved in the oxidation of myo-inositol (MI) to 2-keto-myo-inositol (2KMI or 2-inosose). In Serratia proteamaculans (strain 568), this protein is Inositol 2-dehydrogenase.